We begin with the raw amino-acid sequence, 74 residues long: ATP synthase subunit c (74 aa).

2 consecutive transmembrane segments (helical) span residues 8–28 and 52–72; these read FIGTGLMAIGMYGAALGVSNI and IGAGLAEAMGLFSFVIAMLLI.

This sequence belongs to the ATPase C chain family. In terms of assembly, F-type ATPases have 2 components, F(1) - the catalytic core - and F(0) - the membrane proton channel. F(1) has five subunits: alpha(3), beta(3), gamma(1), delta(1), epsilon(1). F(0) has three main subunits: a(1), b(2) and c(10-14). The alpha and beta chains form an alternating ring which encloses part of the gamma chain. F(1) is attached to F(0) by a central stalk formed by the gamma and epsilon chains, while a peripheral stalk is formed by the delta and b chains.

It is found in the cell inner membrane. In terms of biological role, f(1)F(0) ATP synthase produces ATP from ADP in the presence of a proton or sodium gradient. F-type ATPases consist of two structural domains, F(1) containing the extramembraneous catalytic core and F(0) containing the membrane proton channel, linked together by a central stalk and a peripheral stalk. During catalysis, ATP synthesis in the catalytic domain of F(1) is coupled via a rotary mechanism of the central stalk subunits to proton translocation. Key component of the F(0) channel; it plays a direct role in translocation across the membrane. A homomeric c-ring of between 10-14 subunits forms the central stalk rotor element with the F(1) delta and epsilon subunits. This is ATP synthase subunit c from Rickettsia conorii (strain ATCC VR-613 / Malish 7).